A 167-amino-acid polypeptide reads, in one-letter code: 3-isopropylmalate dehydratase small subunit (167 aa).

This sequence belongs to the LeuD family. LeuD type 2 subfamily. Heterodimer of LeuC and LeuD.

The catalysed reaction is (2R,3S)-3-isopropylmalate = (2S)-2-isopropylmalate. It participates in amino-acid biosynthesis; L-leucine biosynthesis; L-leucine from 3-methyl-2-oxobutanoate: step 2/4. Functionally, catalyzes the isomerization between 2-isopropylmalate and 3-isopropylmalate, via the formation of 2-isopropylmaleate. This is 3-isopropylmalate dehydratase small subunit from Wolinella succinogenes (strain ATCC 29543 / DSM 1740 / CCUG 13145 / JCM 31913 / LMG 7466 / NCTC 11488 / FDC 602W) (Vibrio succinogenes).